Here is a 536-residue protein sequence, read N- to C-terminus: Chaperonin GroEL 2 (536 aa).

ATP-binding positions include 29–32 (TLGP), 86–90 (DGTTT), Gly412, and Asp495.

It belongs to the chaperonin (HSP60) family. In terms of assembly, forms a cylinder of 14 subunits composed of two heptameric rings stacked back-to-back. Interacts with the co-chaperonin GroES.

It is found in the cytoplasm. It catalyses the reaction ATP + H2O + a folded polypeptide = ADP + phosphate + an unfolded polypeptide.. Together with its co-chaperonin GroES, plays an essential role in assisting protein folding. The GroEL-GroES system forms a nano-cage that allows encapsulation of the non-native substrate proteins and provides a physical environment optimized to promote and accelerate protein folding. This chain is Chaperonin GroEL 2, found in Arthrobacter sp. (strain FB24).